Reading from the N-terminus, the 774-residue chain is Subtilisin-like protease SBT3.5 (774 aa).

Positions 1–23 (MRNCRVLLVLVLSLVIVLNVVRA) are cleaved as a signal peptide. Positions 24–108 (SDESKVHIVY…VMADSFYELA (85 aa)) are cleaved as a propeptide — removed in mature form. The 80-residue stretch at 29–108 (VHIVYLGEKQ…VMADSFYELA (80 aa)) folds into the Inhibitor I9 domain. Positions 112–621 (TWDYLGLSVA…GGIVNPEKAA (510 aa)) constitute a Peptidase S8 domain. N-linked (GlcNAc...) asparagine glycosylation is present at N128. D142 functions as the Charge relay system in the catalytic mechanism. N201 carries N-linked (GlcNAc...) asparagine glycosylation. The active-site Charge relay system is the H217. N-linked (GlcNAc...) asparagine glycosylation is found at N232, N394, N409, and N539. In terms of domain architecture, PA spans 383–478 (SLVYPENAGF…ELGTDVLLYI (96 aa)). Residue S552 is the Charge relay system of the active site. N644, N654, N725, and N755 each carry an N-linked (GlcNAc...) asparagine glycan.

It belongs to the peptidase S8 family. Expressed in roots, leaves, stems, flower buds, developing siliques and mature seeds.

The protein resides in the secreted. It localises to the cell wall. Serine protease that cleaves the pectin methylesterase 17 (PME17) protein to release the PME17 mature form in the apoplasm. The sequence is that of Subtilisin-like protease SBT3.5 from Arabidopsis thaliana (Mouse-ear cress).